A 1133-amino-acid polypeptide reads, in one-letter code: Early transcription factor large subunit homolog (1133 aa).

The Helicase ATP-binding domain maps to 52–352 (KGGRAFFPCD…PNGQPLQRQQ (301 aa)). 99-106 (WQTGTGKS) is a binding site for ATP. The DEAH box signature appears at 281–284 (DEIH). A Helicase C-terminal domain is found at 524-724 (MMKDILSIIR…EGDKALRKHA (201 aa)).

Belongs to the DEAD box helicase family. DEAH subfamily.

Its subcellular location is the virion. It catalyses the reaction ATP + H2O = ADP + phosphate + H(+). In terms of biological role, putative initation factor. This African swine fever virus (isolate Tick/South Africa/Pretoriuskop Pr4/1996) (ASFV) protein is Early transcription factor large subunit homolog.